Reading from the N-terminus, the 894-residue chain is Protein SEY1 (894 aa).

The segment at 1–64 is disordered; it reads MGLDVDSVPI…PRALEPAQVT (64 aa). Topologically, residues 1–768 are cytoplasmic; that stretch reads MGLDVDSVPI…KRGTVSSMSQ (768 aa). The span at 9–24 shows a compositional bias: low complexity; it reads PIAEAAAPSSMAATEP. The segment covering 40–53 has biased composition (polar residues); sequence APMNTDSSRETMPT. The 223-residue stretch at 137-359 folds into the GB1/RHD3-type G domain; that stretch reads GFGYDICAVL…DESYVFKTEY (223 aa). Residue 147–154 coordinates GTP; sequence GSQSTGKS. Residues 536–559 are a coiled coil; the sequence is KVDDERAQLLDELHTLARTLRANE. Residues 769-789 traverse the membrane as a helical segment; sequence VPIWMYGVLVVLGWNEAMAVL. At 790-792 the chain is on the lumenal side; sequence RNP. A helical transmembrane segment spans residues 793 to 813; sequence VYFTLLCMVLATAYVIWRLNL. Residues 814 to 894 lie on the Cytoplasmic side of the membrane; the sequence is GTPVLALASG…DSHPRLPASF (81 aa). A disordered region spans residues 841–894; the sequence is DGTPPSANRAREYRVPSGSTAHVSEKTPHRPLTTSGAAEADTVEDSHPRLPASF.

The protein belongs to the TRAFAC class dynamin-like GTPase superfamily. GB1/RHD3 GTPase family. RHD3 subfamily.

The protein localises to the endoplasmic reticulum membrane. Its function is as follows. Cooperates with the reticulon proteins and tubule-shaping DP1 family proteins to generate and maintain the structure of the tubular endoplasmic reticulum network. Has GTPase activity, which is required for its function in ER organization. The protein is Protein SEY1 of Malassezia globosa (strain ATCC MYA-4612 / CBS 7966) (Dandruff-associated fungus).